The chain runs to 144 residues: Large ribosomal subunit protein uL13 (144 aa).

The protein belongs to the universal ribosomal protein uL13 family. Part of the 50S ribosomal subunit.

Its function is as follows. This protein is one of the early assembly proteins of the 50S ribosomal subunit, although it is not seen to bind rRNA by itself. It is important during the early stages of 50S assembly. This Clostridium tetani (strain Massachusetts / E88) protein is Large ribosomal subunit protein uL13.